We begin with the raw amino-acid sequence, 209 residues long: Uracil phosphoribosyltransferase (209 aa).

Residues R79, R104, and 131–139 each bind 5-phospho-alpha-D-ribose 1-diphosphate; that span reads DPMLATGGS. Uracil contacts are provided by residues V194 and 199–201; that span reads GDA. D200 contributes to the 5-phospho-alpha-D-ribose 1-diphosphate binding site.

This sequence belongs to the UPRTase family. Requires Mg(2+) as cofactor.

The catalysed reaction is UMP + diphosphate = 5-phospho-alpha-D-ribose 1-diphosphate + uracil. Its pathway is pyrimidine metabolism; UMP biosynthesis via salvage pathway; UMP from uracil: step 1/1. Allosterically activated by GTP. Its function is as follows. Catalyzes the conversion of uracil and 5-phospho-alpha-D-ribose 1-diphosphate (PRPP) to UMP and diphosphate. In Bacillus cytotoxicus (strain DSM 22905 / CIP 110041 / 391-98 / NVH 391-98), this protein is Uracil phosphoribosyltransferase.